Reading from the N-terminus, the 470-residue chain is 3-isopropylmalate dehydratase large subunit (470 aa).

[4Fe-4S] cluster-binding residues include Cys347, Cys407, and Cys410.

This sequence belongs to the aconitase/IPM isomerase family. LeuC type 1 subfamily. In terms of assembly, heterodimer of LeuC and LeuD. [4Fe-4S] cluster serves as cofactor.

The enzyme catalyses (2R,3S)-3-isopropylmalate = (2S)-2-isopropylmalate. Its pathway is amino-acid biosynthesis; L-leucine biosynthesis; L-leucine from 3-methyl-2-oxobutanoate: step 2/4. In terms of biological role, catalyzes the isomerization between 2-isopropylmalate and 3-isopropylmalate, via the formation of 2-isopropylmaleate. The polypeptide is 3-isopropylmalate dehydratase large subunit (Shewanella amazonensis (strain ATCC BAA-1098 / SB2B)).